Reading from the N-terminus, the 208-residue chain is FMN-dependent NADH:quinone oxidoreductase 4 (208 aa).

Belongs to the azoreductase type 1 family. Homodimer. FMN is required as a cofactor.

The enzyme catalyses 2 a quinone + NADH + H(+) = 2 a 1,4-benzosemiquinone + NAD(+). The catalysed reaction is N,N-dimethyl-1,4-phenylenediamine + anthranilate + 2 NAD(+) = 2-(4-dimethylaminophenyl)diazenylbenzoate + 2 NADH + 2 H(+). Its function is as follows. Quinone reductase that provides resistance to thiol-specific stress caused by electrophilic quinones. In terms of biological role, also exhibits azoreductase activity. Catalyzes the reductive cleavage of the azo bond in aromatic azo compounds to the corresponding amines. This chain is FMN-dependent NADH:quinone oxidoreductase 4, found in Bacillus cereus (strain ATCC 10987 / NRS 248).